A 295-amino-acid polypeptide reads, in one-letter code: Acetylglutamate kinase (295 aa).

Residues 64–65 (GG), Arg86, and Asn190 contribute to the substrate site.

Belongs to the acetylglutamate kinase family. ArgB subfamily.

It localises to the cytoplasm. The catalysed reaction is N-acetyl-L-glutamate + ATP = N-acetyl-L-glutamyl 5-phosphate + ADP. It participates in amino-acid biosynthesis; L-arginine biosynthesis; N(2)-acetyl-L-ornithine from L-glutamate: step 2/4. Its function is as follows. Catalyzes the ATP-dependent phosphorylation of N-acetyl-L-glutamate. The polypeptide is Acetylglutamate kinase (Oleidesulfovibrio alaskensis (strain ATCC BAA-1058 / DSM 17464 / G20) (Desulfovibrio alaskensis)).